Here is a 102-residue protein sequence, read N- to C-terminus: MTQEKMYPHLFSERCANQHQHRTAEEKKYVSEKQLIHWRCEEPSAHHNSIDIKRMKHFGSALRLRQTFHLDTADHPCVITMNPALPWKLEGSNSTSTLPLPA.

In terms of tissue distribution, expressed in normal and neoplastic endometrial tissues.

May act as a potential tumor suppressor. This is Protein CASC2, isoform 3 (CASC2) from Homo sapiens (Human).